The following is a 169-amino-acid chain: NADH-quinone oxidoreductase subunit B (169 aa).

Cys-42, Cys-43, Cys-107, and Cys-136 together coordinate [4Fe-4S] cluster.

The protein belongs to the complex I 20 kDa subunit family. In terms of assembly, NDH-1 is composed of 14 different subunits. Subunits NuoB, C, D, E, F, and G constitute the peripheral sector of the complex. The cofactor is [4Fe-4S] cluster.

The protein localises to the cell inner membrane. It catalyses the reaction a quinone + NADH + 5 H(+)(in) = a quinol + NAD(+) + 4 H(+)(out). Functionally, NDH-1 shuttles electrons from NADH, via FMN and iron-sulfur (Fe-S) centers, to quinones in the respiratory chain. The immediate electron acceptor for the enzyme in this species is believed to be ubiquinone. Couples the redox reaction to proton translocation (for every two electrons transferred, four hydrogen ions are translocated across the cytoplasmic membrane), and thus conserves the redox energy in a proton gradient. This chain is NADH-quinone oxidoreductase subunit B, found in Wolinella succinogenes (strain ATCC 29543 / DSM 1740 / CCUG 13145 / JCM 31913 / LMG 7466 / NCTC 11488 / FDC 602W) (Vibrio succinogenes).